Here is a 271-residue protein sequence, read N- to C-terminus: MKTELKAVLKRPKISEKFDELREKKEGALIGYVMAGDPTFEASSEVVKALAKGGADIIELGFPFSDPVADGPTIQVAGQRALAEGMDIERYFAFARALEVDVPLVCMTYYNPVFRYGVEKFVENAAEAGISGLIIPDIPVEEAADLKTGCDAHGLDLIFLVAPTTTEARIRKILQRGSGFIYLVSRLGVTGARDDVAGSTKELLSRVNTDIPKAVGFGISTGEQAAEVRKAGADGVIVGSAFVRIIEEGTDVNERLETLARELKSGMLEAN.

Residues E59 and D70 each act as proton acceptor in the active site.

This sequence belongs to the TrpA family. Tetramer of two alpha and two beta chains.

The enzyme catalyses (1S,2R)-1-C-(indol-3-yl)glycerol 3-phosphate + L-serine = D-glyceraldehyde 3-phosphate + L-tryptophan + H2O. The protein operates within amino-acid biosynthesis; L-tryptophan biosynthesis; L-tryptophan from chorismate: step 5/5. The alpha subunit is responsible for the aldol cleavage of indoleglycerol phosphate to indole and glyceraldehyde 3-phosphate. The polypeptide is Tryptophan synthase alpha chain (Methanosarcina mazei (strain ATCC BAA-159 / DSM 3647 / Goe1 / Go1 / JCM 11833 / OCM 88) (Methanosarcina frisia)).